A 340-amino-acid chain; its full sequence is 3-isopropylmalate dehydrogenase (340 aa).

Residues arginine 88, arginine 98, arginine 122, and aspartate 212 each contribute to the substrate site. Aspartate 212, aspartate 236, and aspartate 240 together coordinate Mg(2+). Residue 272–284 (GSAPDIAGQGIAD) coordinates NAD(+).

The protein belongs to the isocitrate and isopropylmalate dehydrogenases family. LeuB type 2 subfamily. As to quaternary structure, homodimer. Requires Mg(2+) as cofactor. Mn(2+) is required as a cofactor.

Its subcellular location is the cytoplasm. The catalysed reaction is (2R,3S)-3-isopropylmalate + NAD(+) = 4-methyl-2-oxopentanoate + CO2 + NADH. The protein operates within amino-acid biosynthesis; L-leucine biosynthesis; L-leucine from 3-methyl-2-oxobutanoate: step 3/4. Catalyzes the oxidation of 3-carboxy-2-hydroxy-4-methylpentanoate (3-isopropylmalate) to 3-carboxy-4-methyl-2-oxopentanoate. The product decarboxylates to 4-methyl-2 oxopentanoate. This Corynebacterium glutamicum (strain R) protein is 3-isopropylmalate dehydrogenase.